Consider the following 111-residue polypeptide: MISTVALFWALCVVCVINMARYYSSLRALLVVLRGCDPLLYQYVDGGGFFTSHGQPSKQIRLVGYIFAQRYLDHHDPEFIRRCERLRGQFILTSALCGLVMVSLVGLILWY.

2 helical membrane-spanning segments follow: residues 1–21 and 90–110; these read MIST…NMAR and FILT…LILW.

The protein belongs to the universal stress protein B family.

It is found in the cell inner membrane. The chain is Universal stress protein B from Yersinia enterocolitica serotype O:8 / biotype 1B (strain NCTC 13174 / 8081).